Reading from the N-terminus, the 563-residue chain is Arginine--tRNA ligase (563 aa).

Positions 121–131 (PNIAKPFSIGH) match the 'HIGH' region motif.

The protein belongs to the class-I aminoacyl-tRNA synthetase family. Monomer.

The protein localises to the cytoplasm. It catalyses the reaction tRNA(Arg) + L-arginine + ATP = L-arginyl-tRNA(Arg) + AMP + diphosphate. This chain is Arginine--tRNA ligase, found in Streptococcus pyogenes serotype M1.